The primary structure comprises 590 residues: Muscarinic acetylcholine receptor M3 (590 aa).

Residues 1–67 (MTLHNNNTTS…DPLGGHTIWQ (67 aa)) are Extracellular-facing. Residues Asn-6, Asn-7, Asn-15, Asn-41, Asn-48, and Asn-53 are each glycosylated (N-linked (GlcNAc...) asparagine). Residues 68–91 (VVFIAFLTGVLALVTIIGNILVIV) traverse the membrane as a helical segment. Topologically, residues 92-104 (AFKVNKQLKTVNN) are cytoplasmic. Residues 105 to 125 (YFLLSLACADLIIGVISMNLF) traverse the membrane as a helical segment. The Extracellular portion of the chain corresponds to 126 to 142 (TTYIIMNRWALGNLACD). Cys-141 and Cys-221 are oxidised to a cystine. A helical membrane pass occupies residues 143-164 (LWLSIDYVASNASVMNLLVISF). At 165 to 184 (DRYFSITRPLTYRAKRTTKR) the chain is on the cytoplasmic side. A helical membrane pass occupies residues 185–207 (AGVMIGLAWVISFILWAPAILFW). Residues 208-229 (QYFVGKRTVPPGECFIQFLSEP) are Extracellular-facing. A helical transmembrane segment spans residues 230 to 252 (TITFGTAIAAFYMPVTIMTILYW). Topologically, residues 253-492 (RIYKETEKRT…LIKEKKAAQT (240 aa)) are cytoplasmic. Residues 275 to 281 (AEAENFV) carry the Basolateral sorting signal motif. The tract at residues 324 to 357 (AEQMDQDHSSSDSWNNNDAAASLENSASSDEEDI) is disordered. Low complexity predominate over residues 334-345 (SDSWNNNDAAAS). Ser-385 is modified (phosphoserine). Residues 398–419 (SVGLERKPSKLQTQQSMDDGGS) form a disordered region. Over residues 407–419 (KLQTQQSMDDGGS) the composition is skewed to polar residues. The chain crosses the membrane as a helical span at residues 493 to 513 (LSAILLAFIITWTPYNIMVLV). Over 514–527 (NTFCDSCIPKTYWN) the chain is Extracellular. Residues 528–547 (LGYWLCYINSTVNPVCYALC) form a helical membrane-spanning segment. The Cytoplasmic portion of the chain corresponds to 548–590 (NKTFRNTFKMLLLCQCDKRKRRKQQYQQRQSVIFHKRVPEQAL).

The protein belongs to the G-protein coupled receptor 1 family. Muscarinic acetylcholine receptor subfamily. CHRM3 sub-subfamily. Homodimer; the dimers can form tetramers. Interacts with NALCN. Interacts with TMEM147.

It localises to the cell membrane. The protein resides in the postsynaptic cell membrane. It is found in the basolateral cell membrane. Its subcellular location is the endoplasmic reticulum membrane. Its function is as follows. The muscarinic acetylcholine receptor mediates various cellular responses, including inhibition of adenylate cyclase, breakdown of phosphoinositides and modulation of potassium channels through the action of G proteins. Primary transducing effect is Pi turnover. The protein is Muscarinic acetylcholine receptor M3 (CHRM3) of Bos taurus (Bovine).